The sequence spans 396 residues: Subtilisin-like protease 5 (396 aa).

Residues 1-20 form the signal peptide; sequence MTGFLTILSLSLAALSVTNA. A propeptide spanning residues 21–116 is cleaved from the precursor; that stretch reads AQILSVPQGA…VEPDAIIKQH (96 aa). Positions 37-114 constitute an Inhibitor I9 domain; it reads YIVVMKDDTS…AFVEPDAIIK (78 aa). One can recognise a Peptidase S8 domain in the interval 125–396; that stretch reads PWGLSRLSNR…SRLLYNGSGR (272 aa). Catalysis depends on charge relay system residues D156 and H187. Residues N230 and N248 are each glycosylated (N-linked (GlcNAc...) asparagine). S342 serves as the catalytic Charge relay system. The disordered stretch occupies residues 376–396; sequence PTIRNPGPDTTSRLLYNGSGR. The N-linked (GlcNAc...) asparagine glycan is linked to N392.

This sequence belongs to the peptidase S8 family.

The protein resides in the secreted. Functionally, secreted subtilisin-like serine protease with keratinolytic activity that contributes to pathogenicity. The sequence is that of Subtilisin-like protease 5 (SUB5) from Arthroderma gypseum (strain ATCC MYA-4604 / CBS 118893) (Microsporum gypseum).